A 1013-amino-acid polypeptide reads, in one-letter code: Lysosomal alpha-mannosidase (1013 aa).

Positions 1 to 49 (MGTGPLTSGVRAGGGNTGWLWMSSCNLGSPVLPISFLFWLLLAAPGARA) are cleaved as a signal peptide. 2 cysteine pairs are disulfide-bonded: Cys55/Cys358 and Cys268/Cys273. Zn(2+) contacts are provided by His72, Asp74, and Asp196. The Nucleophile role is filled by Asp196. N-linked (GlcNAc...) asparagine glycans are attached at residues Asn310, Asn345, and Asn367. Cys412 and Cys472 are oxidised to a cystine. His446 provides a ligand contact to Zn(2+). Asn489, Asn497, Asn544, Asn633, Asn646, Asn693, Asn767, and Asn931 each carry an N-linked (GlcNAc...) asparagine glycan. Cysteines 493 and 501 form a disulfide.

Belongs to the glycosyl hydrolase 38 family. It depends on Zn(2+) as a cofactor.

The protein localises to the lysosome. The catalysed reaction is Hydrolysis of terminal, non-reducing alpha-D-mannose residues in alpha-D-mannosides.. In terms of biological role, necessary for the catabolism of N-linked carbohydrates released during glycoprotein turnover. This Mus musculus (Mouse) protein is Lysosomal alpha-mannosidase (Man2b1).